We begin with the raw amino-acid sequence, 157 residues long: Protein Smg (157 aa).

The protein belongs to the Smg family.

This chain is Protein Smg, found in Yersinia pseudotuberculosis serotype O:1b (strain IP 31758).